A 270-amino-acid chain; its full sequence is Putative pyruvate, phosphate dikinase regulatory protein (270 aa).

ADP is bound at residue 151-158 (GVSRTSKT).

This sequence belongs to the pyruvate, phosphate/water dikinase regulatory protein family. PDRP subfamily.

The enzyme catalyses N(tele)-phospho-L-histidyl/L-threonyl-[pyruvate, phosphate dikinase] + ADP = N(tele)-phospho-L-histidyl/O-phospho-L-threonyl-[pyruvate, phosphate dikinase] + AMP + H(+). It carries out the reaction N(tele)-phospho-L-histidyl/O-phospho-L-threonyl-[pyruvate, phosphate dikinase] + phosphate + H(+) = N(tele)-phospho-L-histidyl/L-threonyl-[pyruvate, phosphate dikinase] + diphosphate. Functionally, bifunctional serine/threonine kinase and phosphorylase involved in the regulation of the pyruvate, phosphate dikinase (PPDK) by catalyzing its phosphorylation/dephosphorylation. This is Putative pyruvate, phosphate dikinase regulatory protein from Bacillus velezensis (strain DSM 23117 / BGSC 10A6 / LMG 26770 / FZB42) (Bacillus amyloliquefaciens subsp. plantarum).